Consider the following 157-residue polypeptide: Endoribonuclease YbeY (157 aa).

3 residues coordinate Zn(2+): H121, H125, and D131.

This sequence belongs to the endoribonuclease YbeY family. Zn(2+) serves as cofactor.

It is found in the cytoplasm. In terms of biological role, single strand-specific metallo-endoribonuclease involved in late-stage 70S ribosome quality control and in maturation of the 3' terminus of the 16S rRNA. This is Endoribonuclease YbeY from Salinibacter ruber (strain DSM 13855 / M31).